The primary structure comprises 97 residues: Citrate lyase acyl carrier protein (97 aa).

An O-(phosphoribosyl dephospho-coenzyme A)serine modification is found at Ser14.

It belongs to the CitD family. As to quaternary structure, oligomer with a subunit composition of (alpha,beta,gamma)6.

It localises to the cytoplasm. Functionally, covalent carrier of the coenzyme of citrate lyase. The polypeptide is Citrate lyase acyl carrier protein (Oenococcus oeni (strain ATCC BAA-331 / PSU-1)).